Reading from the N-terminus, the 169-residue chain is UPF0303 protein BruAb1_1406 (169 aa).

This sequence belongs to the UPF0303 family.

The protein is UPF0303 protein BruAb1_1406 of Brucella abortus biovar 1 (strain 9-941).